Here is a 488-residue protein sequence, read N- to C-terminus: 3-octaprenyl-4-hydroxybenzoate carboxy-lyase (488 aa).

Residue N172 participates in Mn(2+) binding. Prenylated FMN is bound by residues 175 to 177, 189 to 191, and 194 to 195; these read IYR, RWL, and RG. Residue E238 coordinates Mn(2+). Residue D287 is the Proton donor of the active site.

This sequence belongs to the UbiD family. In terms of assembly, homohexamer. Prenylated FMN serves as cofactor. It depends on Mn(2+) as a cofactor.

The protein resides in the cell membrane. It carries out the reaction a 4-hydroxy-3-(all-trans-polyprenyl)benzoate + H(+) = a 2-(all-trans-polyprenyl)phenol + CO2. The protein operates within cofactor biosynthesis; ubiquinone biosynthesis. In terms of biological role, catalyzes the decarboxylation of 3-octaprenyl-4-hydroxy benzoate to 2-octaprenylphenol, an intermediate step in ubiquinone biosynthesis. The chain is 3-octaprenyl-4-hydroxybenzoate carboxy-lyase from Pseudomonas fluorescens (strain SBW25).